The primary structure comprises 460 residues: Equilibrative nucleoside transporter 1 (460 aa).

Over 1 to 12 (MTTSHQPQDRYK) the chain is Cytoplasmic. The helical transmembrane segment at 13–29 (AVWLIFFVLGLGTLLPW) threads the bilayer. Over 30–82 (NFFMTATKYFTNRLDVSQNVSSDTDQSCESTKALADPTVALPARSSLSAIFNN) the chain is Extracellular. The N-linked (GlcNAc...) asparagine glycan is linked to asparagine 48. The chain crosses the membrane as a helical span at residues 83-107 (VMTLCAMLPLLVFTCLNSFLHQRIS). The Cytoplasmic segment spans residues 108–111 (QSVR). A helical transmembrane segment spans residues 112-130 (ILGSLLAILLVFLVTAALV). At 131–138 (KVEMDALI) the chain is on the extracellular side. Residues 139 to 157 (FFVITMIKIVLINSFGAIL) form a helical membrane-spanning segment. The Cytoplasmic portion of the chain corresponds to 158–174 (QASLFGLAGVLPANYTA). Residues 175–199 (PIMSGQGLAGFFTSVAMICAIASGS) traverse the membrane as a helical segment. Residues 200-206 (ELSESAF) are Extracellular-facing. A helical transmembrane segment spans residues 207-227 (GYFITACAVVILAILCYLALP). The Cytoplasmic portion of the chain corresponds to 228–291 (RTEFYRHYLQ…IKAILKSICV (64 aa)). A Phosphoserine modification is found at serine 254. The segment covering 255–266 (KGEEPKGRREES) has biased composition (basic and acidic residues). Residues 255–277 (KGEEPKGRREESGVPGPNSPPTN) form a disordered region. The residue at position 273 (serine 273) is a Phosphoserine. Residues 292–311 (PALSVCFIFTVTIGLFPAVT) traverse the membrane as a helical segment. Residues 312–323 (AEVESSIAGTSP) are Extracellular-facing. The helical transmembrane segment at 324–342 (WKSYFIPVACFLNFNVFDW) threads the bilayer. The Cytoplasmic segment spans residues 343-359 (LGRSLTAVCMWPGQDSR). A helical membrane pass occupies residues 360 to 378 (WLPVLVASRIVFIPLLMLC). The Extracellular segment spans residues 379–397 (NVKARHCGAQRHHFVFKHD). A helical transmembrane segment spans residues 398–417 (AWFIAFMAAFAFSNGYLASL). Over 418–435 (CMCFGPKKVKPAEAETAG) the chain is Cytoplasmic. Residues 436-456 (NIMSFFLCLGLALGAVLSFLL) traverse the membrane as a helical segment. Residues 457–460 (RALV) are Extracellular-facing.

The protein belongs to the SLC29A/ENT transporter (TC 2.A.57) family. Identified in a complex with STOM. In terms of processing, glycosylated. Highly expressed in heart, spleen, lung, liver and testis. Lower level of expression in brain and kidney. Expressed in adipose tissues, brown adipocytes expressing significantly higher amounts than white adipocytes. Expressed in seminiferous tubules.

The protein resides in the basolateral cell membrane. It localises to the apical cell membrane. Its subcellular location is the cell membrane. It catalyses the reaction adenosine(in) = adenosine(out). It carries out the reaction guanosine(in) = guanosine(out). The enzyme catalyses inosine(in) = inosine(out). The catalysed reaction is uridine(out) = uridine(in). It catalyses the reaction thymidine(in) = thymidine(out). It carries out the reaction cytidine(in) = cytidine(out). The enzyme catalyses adenine(out) = adenine(in). The catalysed reaction is guanine(out) = guanine(in). It catalyses the reaction thymine(out) = thymine(in). It carries out the reaction uracil(in) = uracil(out). The enzyme catalyses hypoxanthine(out) = hypoxanthine(in). Transporter activity is sensitive to low concentrations of the inhibitor nitrobenzylmercaptopurine riboside (NBMPR). In terms of biological role, uniporter involved in the facilitative transport of nucleosides and nucleobases, and contributes to maintaining their cellular homeostasis. Functions as a Na(+)-independent transporter. Involved in the transport of nucleosides such as adenosine, guanosine, inosine, uridine, thymidine and cytidine. Also transports purine (hypoxanthine, adenine, guanine) and pyrimidine nucleobases (thymine, uracil). Mediates basolateral nucleoside uptake into Sertoli cells, thereby regulating the transport of nucleosides in testis across the blood-testis-barrier. Regulates inosine levels in brown adipocytes tissues (BAT) and extracellular inosine levels, which controls BAT-dependent energy expenditure. The protein is Equilibrative nucleoside transporter 1 of Mus musculus (Mouse).